The sequence spans 335 residues: Tryptophan--tRNA ligase (335 aa).

ATP-binding positions include 19 to 21 (QPS) and 28 to 29 (GN). The short motif at 20 to 29 (PSSGMLHLGN) is the 'HIGH' region element. Asp-143 is an L-tryptophan binding site. ATP is bound by residues 155-157 (GAD), Ile-192, and 201-205 (KMSKS). A 'KMSKS' region motif is present at residues 201-205 (KMSKS).

This sequence belongs to the class-I aminoacyl-tRNA synthetase family. As to quaternary structure, homodimer.

It localises to the cytoplasm. It carries out the reaction tRNA(Trp) + L-tryptophan + ATP = L-tryptophyl-tRNA(Trp) + AMP + diphosphate + H(+). Catalyzes the attachment of tryptophan to tRNA(Trp). This Tropheryma whipplei (strain TW08/27) (Whipple's bacillus) protein is Tryptophan--tRNA ligase.